Consider the following 71-residue polypeptide: SPbeta prophage-derived uncharacterized protein YorP (71 aa).

This is SPbeta prophage-derived uncharacterized protein YorP (yorP) from Bacillus subtilis (strain 168).